The chain runs to 239 residues: Ribonuclease PH (239 aa).

Residues Arg87 and 125–127 (GTR) each bind phosphate.

The protein belongs to the RNase PH family. In terms of assembly, homohexameric ring arranged as a trimer of dimers.

The catalysed reaction is tRNA(n+1) + phosphate = tRNA(n) + a ribonucleoside 5'-diphosphate. Phosphorolytic 3'-5' exoribonuclease that plays an important role in tRNA 3'-end maturation. Removes nucleotide residues following the 3'-CCA terminus of tRNAs; can also add nucleotides to the ends of RNA molecules by using nucleoside diphosphates as substrates, but this may not be physiologically important. Probably plays a role in initiation of 16S rRNA degradation (leading to ribosome degradation) during starvation. This is Ribonuclease PH from Saccharophagus degradans (strain 2-40 / ATCC 43961 / DSM 17024).